The sequence spans 369 residues: GDSL esterase/lipase At5g42170 (369 aa).

A signal peptide spans 1–16 (MSRLVYVIFLLVVVEG). Residues Asn28 and Asn45 are each glycosylated (N-linked (GlcNAc...) asparagine). Ser57 serves as the catalytic Nucleophile. N-linked (GlcNAc...) asparagine glycans are attached at residues Asn203 and Asn336. Active-site residues include Asp344 and His347.

Belongs to the 'GDSL' lipolytic enzyme family.

The protein localises to the secreted. The protein is GDSL esterase/lipase At5g42170 of Arabidopsis thaliana (Mouse-ear cress).